A 307-amino-acid chain; its full sequence is Protease HtpX homolog (307 aa).

Transmembrane regions (helical) follow at residues 7 to 27 (AILL…IGGA) and 28 to 48 (SGAT…YWNS). H130 is a binding site for Zn(2+). E131 is a catalytic residue. Residue H134 participates in Zn(2+) binding. 2 consecutive transmembrane segments (helical) span residues 145–165 (ITAT…FFGG) and 171–191 (GPGI…AMLV). E200 contacts Zn(2+). Residues 277–307 (AGQSGGGLAPGGPPPDPSSPWNKGSRRGPWG) form a disordered region.

This sequence belongs to the peptidase M48B family. Zn(2+) serves as cofactor.

The protein localises to the cell inner membrane. The sequence is that of Protease HtpX homolog from Nitrobacter winogradskyi (strain ATCC 25391 / DSM 10237 / CIP 104748 / NCIMB 11846 / Nb-255).